We begin with the raw amino-acid sequence, 562 residues long: Septation ring formation regulator EzrA (562 aa).

Over 1–2 the chain is Extracellular; the sequence is ME. A helical membrane pass occupies residues 3 to 21; that stretch reads FVIGLLIVLLALFAAGYFF. The Cytoplasmic portion of the chain corresponds to 22-562; sequence RKKIYAEIDR…VEKIKADISA (541 aa). 2 coiled-coil regions span residues 377–425 and 470–497; these read YSLL…LKKT and MEEAGAHLKQAEDIVNRASRESEELVEQ.

The protein belongs to the EzrA family. Post-translationally, may be degraded by FtsH protease.

It is found in the cell membrane. Its subcellular location is the membrane raft. Negative regulator of FtsZ ring formation; modulates the frequency and position of FtsZ ring formation. Inhibits FtsZ ring formation at polar sites. Interacts either with FtsZ or with one of its binding partners to promote depolymerization. The protein is Septation ring formation regulator EzrA of Bacillus subtilis (strain 168).